We begin with the raw amino-acid sequence, 446 residues long: Chromosomal replication initiator protein DnaA (446 aa).

Positions 1–92 (MENISDLWNS…SQAEEEIDLP (92 aa)) are domain I, interacts with DnaA modulators. The tract at residues 93 to 109 (PAKPNAAQDDSNHLPQS) is domain II. Residues 110-326 (MLNPKYTFDT…GALIRVVAYS (217 aa)) are domain III, AAA+ region. Residues G154, G156, K157, and T158 each contribute to the ATP site. Positions 327–446 (SLINKDINAD…QVEEINDILK (120 aa)) are domain IV, binds dsDNA.

This sequence belongs to the DnaA family. In terms of assembly, oligomerizes as a right-handed, spiral filament on DNA at oriC.

Its subcellular location is the cytoplasm. Its function is as follows. Plays an essential role in the initiation and regulation of chromosomal replication. ATP-DnaA binds to the origin of replication (oriC) to initiate formation of the DNA replication initiation complex once per cell cycle. Binds the DnaA box (a 9 base pair repeat at the origin) and separates the double-stranded (ds)DNA. Forms a right-handed helical filament on oriC DNA; dsDNA binds to the exterior of the filament while single-stranded (ss)DNA is stabiized in the filament's interior. The ATP-DnaA-oriC complex binds and stabilizes one strand of the AT-rich DNA unwinding element (DUE), permitting loading of DNA polymerase. After initiation quickly degrades to an ADP-DnaA complex that is not apt for DNA replication. Binds acidic phospholipids. This chain is Chromosomal replication initiator protein DnaA, found in Bacillus anthracis (strain A0248).